A 569-amino-acid polypeptide reads, in one-letter code: Phenylalanine ammonia-lyase (569 aa).

The Proton donor/acceptor role is filled by tyrosine 78. The segment at residues 167–169 (ASG) is a cross-link (5-imidazolinone (Ala-Gly)). The residue at position 168 (serine 168) is a 2,3-didehydroalanine (Ser). 7 residues coordinate (E)-cinnamate: asparagine 223, glutamine 311, arginine 317, asparagine 347, lysine 419, glutamate 448, and asparagine 451.

It belongs to the PAL/histidase family. In terms of assembly, homotetramer. In terms of processing, contains an active site 4-methylidene-imidazol-5-one (MIO), which is formed autocatalytically by cyclization and dehydration of residues Ala-Ser-Gly.

It is found in the cytoplasm. It catalyses the reaction L-phenylalanine = (E)-cinnamate + NH4(+). It participates in phenylpropanoid metabolism; trans-cinnamate biosynthesis; trans-cinnamate from L-phenylalanine: step 1/1. Its function is as follows. Catalyzes the non-oxidative deamination of L-phenylalanine to form trans-cinnamic acid, the first step in the phenylpropanoid pathway. In Nostoc punctiforme (strain ATCC 29133 / PCC 73102), this protein is Phenylalanine ammonia-lyase.